Here is a 245-residue protein sequence, read N- to C-terminus: Geranylgeranylglyceryl phosphate synthase (245 aa).

Mg(2+) contacts are provided by D22 and S51. Sn-glycerol 1-phosphate is bound by residues 169-175 (YLEAGSG), 200-201 (GG), and 222-223 (GT).

It belongs to the GGGP/HepGP synthase family. Group II subfamily. As to quaternary structure, homotetramer. Homohexamer. Requires Mg(2+) as cofactor.

Its subcellular location is the cytoplasm. It catalyses the reaction sn-glycerol 1-phosphate + (2E,6E,10E)-geranylgeranyl diphosphate = sn-3-O-(geranylgeranyl)glycerol 1-phosphate + diphosphate. Its pathway is membrane lipid metabolism; glycerophospholipid metabolism. In terms of biological role, prenyltransferase that catalyzes the transfer of the geranylgeranyl moiety of geranylgeranyl diphosphate (GGPP) to the C3 hydroxyl of sn-glycerol-1-phosphate (G1P). This reaction is the first ether-bond-formation step in the biosynthesis of archaeal membrane lipids. This is Geranylgeranylglyceryl phosphate synthase from Methanothermobacter thermautotrophicus (strain ATCC 29096 / DSM 1053 / JCM 10044 / NBRC 100330 / Delta H) (Methanobacterium thermoautotrophicum).